The sequence spans 561 residues: Efflux pump bfoC (561 aa).

The interval 1-55 (MSDTARILGGPSASSSRDGGMELNSFTEVSQTNSRSHSTKEEEGQVDDQQRPARE) is disordered. A compositionally biased stretch (polar residues) spans 24–36 (NSFTEVSQTNSRS). Over residues 38–55 (STKEEEGQVDDQQRPARE) the composition is skewed to basic and acidic residues. The next 13 membrane-spanning stretches (helical) occupy residues 59–79 (GVLGGYKLVLVTIGLCFCIFC), 103–123 (DVGWYASAYLLTTCAVTLTFG), 128–148 (FFPIKWVYLSALLIFELGSFI), 164–184 (VAGLGGGGLLSGSLLIISQCV), 194–214 (GFIMSIFAVASVIAPLMGGAF), 222–242 (WCFYINLPFGLVSAVVILFTF), 257–277 (AVGLDPLGTATFLPGIVCLLL), 293–313 (VVALFVLFGVLLVCFIGLQLW), 335–355 (LYGFCLNGAMFTFVYYLPIWF), 378–398 (VVFAIISGVLVSMTGYLGPFM), 425–445 (IGYQVLLGLSIGVGFQVPIFV), 457–477 (TATALMTFIQLLGGAIFVSVA), and 530–550 (VHTFYLAIGLAAASFLAATVI).

This sequence belongs to the major facilitator superfamily. TCR/Tet family.

Its subcellular location is the cell membrane. In terms of biological role, efflux pump; part of the gene cluster that mediates the biosynthesis of bifonsecin B, a dimeric gamma-naphthopyrone. This Aspergillus brasiliensis (strain CBS 101740 / IMI 381727 / IBT 21946) protein is Efflux pump bfoC.